We begin with the raw amino-acid sequence, 253 residues long: 5-oxoprolinase subunit A (253 aa).

This sequence belongs to the LamB/PxpA family. As to quaternary structure, forms a complex composed of PxpA, PxpB and PxpC.

The catalysed reaction is 5-oxo-L-proline + ATP + 2 H2O = L-glutamate + ADP + phosphate + H(+). Catalyzes the cleavage of 5-oxoproline to form L-glutamate coupled to the hydrolysis of ATP to ADP and inorganic phosphate. This chain is 5-oxoprolinase subunit A, found in Bacillus cereus (strain B4264).